Here is a 164-residue protein sequence, read N- to C-terminus: MVDLNDKVIRGYLLSLVGEDGLQMIEKMPEGEVTDEEIAAKTEVLLNTVRRTLFILNENKFAICRRERDSNSGWLTYLWRLDFSDIEHQLMKEKKKLLRNLKTRLEFEENNVFYMCPQGCVRLLFDEATETEFLCPMCGEDLVFYDNSHFIDVLRKRVDALSSA.

The 83-residue stretch at 5-87 folds into the HTH TFE/IIEalpha-type domain; it reads NDKVIRGYLL…LWRLDFSDIE (83 aa).

It belongs to the TFE family. In terms of assembly, monomer. Interaction with RNA polymerase subunits RpoF and RpoE is necessary for Tfe stimulatory transcription activity. Able to interact with Tbp and RNA polymerase in the absence of DNA promoter. Interacts both with the preinitiation and elongation complexes.

Functionally, transcription factor that plays a role in the activation of archaeal genes transcribed by RNA polymerase. Facilitates transcription initiation by enhancing TATA-box recognition by TATA-box-binding protein (Tbp), and transcription factor B (Tfb) and RNA polymerase recruitment. Not absolutely required for transcription in vitro, but particularly important in cases where Tbp or Tfb function is not optimal. It dynamically alters the nucleic acid-binding properties of RNA polymerases by stabilizing the initiation complex and destabilizing elongation complexes. Seems to translocate with the RNA polymerase following initiation and acts by binding to the non template strand of the transcription bubble in elongation complexes. In Methanosarcina barkeri (strain Fusaro / DSM 804), this protein is Transcription factor E.